The sequence spans 808 residues: Zinc finger protein 148 (808 aa).

2 disordered regions span residues 15–86 (SPVG…ISQD) and 131–162 (DSLI…SPAK). A compositionally biased stretch (acidic residues) spans 56–73 (AEDDDDEDEEEDDDDDLA). Residues 150 to 159 (HKKKKRKQRS) show a composition bias toward basic residues. 4 consecutive C2H2-type zinc fingers follow at residues 180 to 202 (HICE…VFIH), 208 to 230 (FQCN…EKIH), 236 to 258 (FRCD…KRTH), and 264 to 287 (YQCD…RMCH). Disordered regions lie at residues 305 to 338 (RTPE…ASIT), 596 to 617 (SINS…QAPP), and 705 to 736 (SFSG…DPQS). 2 stretches are compositionally biased toward polar residues: residues 705–718 (SFSG…SVSP) and 725–736 (QVTSPKKTDPQS).

It belongs to the krueppel C2H2-type zinc-finger protein family.

It localises to the nucleus. Functionally, involved in transcriptional regulation. Represses the transcription of a number of genes. Required for primitive and definitive hematopoiesis during embryonic development. The sequence is that of Zinc finger protein 148 (znf148) from Danio rerio (Zebrafish).